The following is a 429-amino-acid chain: UDP-N-acetylglucosamine 1-carboxyvinyltransferase (429 aa).

Residue 22–23 (KN) participates in phosphoenolpyruvate binding. Arginine 102 contributes to the UDP-N-acetyl-alpha-D-glucosamine binding site. Residue cysteine 126 is the Proton donor of the active site. Cysteine 126 bears the 2-(S-cysteinyl)pyruvic acid O-phosphothioketal mark. UDP-N-acetyl-alpha-D-glucosamine contacts are provided by residues 131–135 (RPVDL), 171–174 (KVSV), aspartate 316, and isoleucine 338.

Belongs to the EPSP synthase family. MurA subfamily.

It is found in the cytoplasm. The catalysed reaction is phosphoenolpyruvate + UDP-N-acetyl-alpha-D-glucosamine = UDP-N-acetyl-3-O-(1-carboxyvinyl)-alpha-D-glucosamine + phosphate. Its pathway is cell wall biogenesis; peptidoglycan biosynthesis. Its function is as follows. Cell wall formation. Adds enolpyruvyl to UDP-N-acetylglucosamine. The polypeptide is UDP-N-acetylglucosamine 1-carboxyvinyltransferase (Brucella abortus (strain S19)).